The sequence spans 89 residues: Small ribosomal subunit protein uS15 (89 aa).

Residues 1–13 (MYLTSEKKEEIFS) are compositionally biased toward basic and acidic residues. The interval 1–24 (MYLTSEKKEEIFSKHGKGKNDTGS) is disordered.

It belongs to the universal ribosomal protein uS15 family. As to quaternary structure, part of the 30S ribosomal subunit. Forms a bridge to the 50S subunit in the 70S ribosome, contacting the 23S rRNA.

In terms of biological role, one of the primary rRNA binding proteins, it binds directly to 16S rRNA where it helps nucleate assembly of the platform of the 30S subunit by binding and bridging several RNA helices of the 16S rRNA. Its function is as follows. Forms an intersubunit bridge (bridge B4) with the 23S rRNA of the 50S subunit in the ribosome. The sequence is that of Small ribosomal subunit protein uS15 from Christiangramia forsetii (strain DSM 17595 / CGMCC 1.15422 / KT0803) (Gramella forsetii).